The chain runs to 338 residues: Fe-S cluster assembly protein DRE2 (338 aa).

The interval 1-165 (MAKSGLLLIH…LPSFKKAANK (165 aa)) is N-terminal SAM-like domain. Residues 166–232 (PLPTFKKKVE…DDLLNEEDAK (67 aa)) form a linker region. The interval 181-223 (VEARVHKAENDDDELEDEEDENLFDASRSKYFDEDDSESLDED) is disordered. 2 stretches are compositionally biased toward acidic residues: residues 190 to 203 (NDDDELEDEEDENL) and 213 to 223 (DEDDSESLDED). Positions 242, 253, 256, and 258 each coordinate [2Fe-2S] cluster. Positions 242–258 (CGKSKTKKKKACKDCSC) are fe-S binding site A. Residues C301, C304, C312, and C315 each coordinate [4Fe-4S] cluster. 2 consecutive short sequence motifs (cx2C motif) follow at residues 301–304 (CGSC) and 312–315 (CTGC). Residues 301–315 (CGSCSLGDAFRCTGC) form a fe-S binding site B region.

It belongs to the anamorsin family. As to quaternary structure, monomer. Interacts with TAH18. Interacts with MIA40. It depends on [2Fe-2S] cluster as a cofactor. [4Fe-4S] cluster is required as a cofactor.

The protein localises to the cytoplasm. It is found in the mitochondrion intermembrane space. Functionally, component of the cytosolic iron-sulfur (Fe-S) protein assembly (CIA) machinery required for the maturation of extramitochondrial Fe-S proteins. Part of an electron transfer chain functioning in an early step of cytosolic Fe-S biogenesis, facilitating the de novo assembly of a [4Fe-4S] cluster on the scaffold complex CFD1-NBP35. Electrons are transferred to DRE2 from NADPH via the FAD- and FMN-containing protein TAH18. TAH18-DRE2 are also required for the assembly of the diferric tyrosyl radical cofactor of ribonucleotide reductase (RNR), probably by providing electrons for reduction during radical cofactor maturation in the catalytic small subunit RNR2. This is Fe-S cluster assembly protein DRE2 from Candida glabrata (strain ATCC 2001 / BCRC 20586 / JCM 3761 / NBRC 0622 / NRRL Y-65 / CBS 138) (Yeast).